The sequence spans 1515 residues: Homeobox protein cut-like 1 (1515 aa).

The stretch at 56–361 (LLKSFQGEID…VKKELNTLKS (306 aa)) forms a coiled coil. Polar residues predominate over residues 393 to 405 (ENATLRISNSDLS). 4 disordered regions span residues 393–453 (ENAT…SPAG), 509–546 (PYST…ISEG), 644–666 (PKRR…TGSD), and 680–702 (LQVQ…NSDD). Over residues 422-432 (GPLPASPPPQL) the composition is skewed to pro residues. Ser-427 bears the Phosphoserine mark. Positions 436 to 447 (TGEQVSNTNGTH) are enriched in polar residues. Over residues 514-544 (SISSPSPLQQSPDVNGMAPSPSQSESAGSIS) the composition is skewed to low complexity. Residues 540–627 (AGSISEGEEI…ILALRSIQGR (88 aa)) constitute a DNA-binding region (CUT 1). The residue at position 761 (Ser-761) is a Phosphoserine. Disordered regions lie at residues 769–871 (PETS…SASA) and 884–923 (YSQS…PSVP). Residues Lys-783, Lys-809, and Lys-840 each participate in a glycyl lysine isopeptide (Lys-Gly) (interchain with G-Cter in SUMO2) cross-link. The segment covering 828–852 (PERRNLTSSEETKADETTASGKERA) has biased composition (basic and acidic residues). 2 stretches are compositionally biased toward polar residues: residues 853–868 (GSSQ…QGPS) and 884–906 (YSQS…NSPL). Ser-904 is modified (phosphoserine). A DNA-binding region (CUT 2) is located at residues 929 to 1016 (QYEVYMYQEV…QGVLPVQGQQ (88 aa)). The segment covering 1032–1044 (QQGCVSSESTPKT) has biased composition (polar residues). Residues 1032–1105 (QQGCVSSEST…QPTTPLPLSG (74 aa)) form a disordered region. Residues 1045–1061 (SASCSPAPESPMSSSES) show a composition bias toward low complexity. Phosphoserine occurs at positions 1054 and 1064. Positions 1112–1199 (QELVAMSPEL…VEKLMDMKRM (88 aa)) form a DNA-binding region, CUT 3. The tract at residues 1207–1242 (RRHSSVSDSQPCEPPSVGIDYSQGASPQPQHQLKKP) is disordered. Residues 1239–1298 (LKKPRVVLAPEEKEALKRAYQQKPYPSPKTIEELATQLNLKTSTVINWFHNYRSRIRREL) constitute a DNA-binding region (homeobox). Phosphoserine is present on Ser-1265. Lys-1279 participates in a covalent cross-link: Glycyl lysine isopeptide (Lys-Gly) (interchain with G-Cter in SUMO2). The tract at residues 1307 to 1488 (SQGQAGASDS…AGARDNPVRK (182 aa)) is disordered. The segment covering 1313–1328 (ASDSPSARSSRAAPSS) has biased composition (low complexity). A compositionally biased stretch (acidic residues) spans 1331–1343 (DSCDGVEATDAEE). Position 1332 is a phosphoserine (Ser-1332). Residues 1365 to 1378 (ADREEATQPAEKAK) are compositionally biased toward basic and acidic residues. Over residues 1406 to 1468 (ADAPAPVPSL…ANAPARRPSS (63 aa)) the composition is skewed to low complexity. 3 positions are modified to phosphoserine: Ser-1468, Ser-1496, and Ser-1506.

It belongs to the CUT homeobox family. In terms of assembly, interacts with BANP. Interacts with SATB1 (via DNA-binding domains); the interaction inhibits the attachment of both proteins to DNA. Phosphorylated by PKA. In terms of processing, as cells progress into S phase, a fraction of CUX1 molecules is proteolytically processed into N-terminally truncated proteins of 110 kDa by CTSL. Cell cycle-dependent processing of CUX1 serves to generate a CDP/Cux p110 with distinct DNA binding and transcriptional properties. In terms of tissue distribution, testis-specific where it is expressed in germ cells.

The protein resides in the nucleus. Functionally, transcription factor involved in the control of neuronal differentiation in the brain. Regulates dendrite development and branching, and dendritic spine formation in cortical layers II-III. Also involved in the control of synaptogenesis. In addition, it has probably a broad role in mammalian development as a repressor of developmentally regulated gene expression. May act by preventing binding of positively-activing CCAAT factors to promoters. Component of nf-munr repressor; binds to the matrix attachment regions (MARs) (5' and 3') of the immunoglobulin heavy chain enhancer. Represses T-cell receptor (TCR) beta enhancer function by binding to MARbeta, an ATC-rich DNA sequence located upstream of the TCR beta enhancer. Binds to the TH enhancer; may require the basic helix-loop-helix protein TCF4 as a coactivator. Plays a role in cell cycle progression, in particular at the G1/S transition. As cells progress into S phase, a fraction of CUX1 molecules is proteolytically processed into N-terminally truncated proteins of 110 kDa. While CUX1 only transiently binds to DNA and carries the CCAAT-displacement activity, CDP/Cux p110 makes a stable interaction with DNA and stimulates expression of genes such as POLA1. The polypeptide is Homeobox protein cut-like 1 (Mus musculus (Mouse)).